An 865-amino-acid chain; its full sequence is Alanine--tRNA ligase (865 aa).

4 residues coordinate Zn(2+): histidine 556, histidine 560, cysteine 660, and histidine 664.

It belongs to the class-II aminoacyl-tRNA synthetase family. Zn(2+) is required as a cofactor.

The protein localises to the cytoplasm. The catalysed reaction is tRNA(Ala) + L-alanine + ATP = L-alanyl-tRNA(Ala) + AMP + diphosphate. Its function is as follows. Catalyzes the attachment of alanine to tRNA(Ala) in a two-step reaction: alanine is first activated by ATP to form Ala-AMP and then transferred to the acceptor end of tRNA(Ala). Also edits incorrectly charged Ser-tRNA(Ala) and Gly-tRNA(Ala) via its editing domain. This chain is Alanine--tRNA ligase, found in Ruthia magnifica subsp. Calyptogena magnifica.